The sequence spans 112 residues: Cytochrome c6 (112 aa).

Positions 1–25 (MKTLLTILALTLVTLTTWLSTPAFA) are cleaved as a signal peptide. Heme c contacts are provided by C39, C42, H43, and M83.

This sequence belongs to the cytochrome c family. PetJ subfamily. Monomer. In terms of processing, binds 1 heme c group covalently per subunit.

It localises to the cellular thylakoid lumen. Functionally, functions as an electron carrier between membrane-bound cytochrome b6-f and photosystem I in oxygenic photosynthesis. This Synechococcus sp. (strain ATCC 27167 / PCC 6312) protein is Cytochrome c6.